Reading from the N-terminus, the 477-residue chain is Glutamate--tRNA ligase (477 aa).

The short motif at 8-18 (PSPTGTLHIGT) is the 'HIGH' region element. The 'KMSKS' region signature appears at 247 to 251 (KLSKR). An ATP-binding site is contributed by K250.

The protein belongs to the class-I aminoacyl-tRNA synthetase family. Glutamate--tRNA ligase type 1 subfamily. Monomer.

Its subcellular location is the cytoplasm. The enzyme catalyses tRNA(Glu) + L-glutamate + ATP = L-glutamyl-tRNA(Glu) + AMP + diphosphate. Functionally, catalyzes the attachment of glutamate to tRNA(Glu) in a two-step reaction: glutamate is first activated by ATP to form Glu-AMP and then transferred to the acceptor end of tRNA(Glu). This is Glutamate--tRNA ligase from Parasynechococcus marenigrum (strain WH8102).